We begin with the raw amino-acid sequence, 200 residues long: MGFVDGFSAFLHSSGAVKFGDFELSGGGRSPYYFDLRSVPSHPHQFRGMIRGLLDSVISEVGLDRFDTLASIPTGGLVVASALAIEAVKPLVYARAAAKGHGTGRTVEGIVRYGARALIIDDVATTGGSVIRAAESLRAAGAIVTDAFVVIDRMEGAEGRLGAEGIKLHRLAGALEVARSLHAAGLIPGDVMRQVEGRTR.

Residues arginine 95, lysine 99, histidine 101, and 121–129 contribute to the 5-phospho-alpha-D-ribose 1-diphosphate site; that span reads DDVATTGGS. Residues threonine 125 and arginine 153 each coordinate orotate.

This sequence belongs to the purine/pyrimidine phosphoribosyltransferase family. PyrE subfamily. In terms of assembly, homodimer. The cofactor is Mg(2+).

The enzyme catalyses orotidine 5'-phosphate + diphosphate = orotate + 5-phospho-alpha-D-ribose 1-diphosphate. The protein operates within pyrimidine metabolism; UMP biosynthesis via de novo pathway; UMP from orotate: step 1/2. Functionally, catalyzes the transfer of a ribosyl phosphate group from 5-phosphoribose 1-diphosphate to orotate, leading to the formation of orotidine monophosphate (OMP). This Cenarchaeum symbiosum (strain A) protein is Orotate phosphoribosyltransferase.